We begin with the raw amino-acid sequence, 132 residues long: Large ribosomal subunit protein eL28 (132 aa).

Belongs to the eukaryotic ribosomal protein eL28 family.

This is Large ribosomal subunit protein eL28 (rpl28) from Dictyostelium discoideum (Social amoeba).